Reading from the N-terminus, the 212-residue chain is Peptide methionine sulfoxide reductase MsrA (212 aa).

Residues 1–14 (MNSIDKTQRITQSD) are compositionally biased toward polar residues. Positions 1 to 21 (MNSIDKTQRITQSDALPGRST) are disordered. Residue C52 is part of the active site.

It belongs to the MsrA Met sulfoxide reductase family.

It carries out the reaction L-methionyl-[protein] + [thioredoxin]-disulfide + H2O = L-methionyl-(S)-S-oxide-[protein] + [thioredoxin]-dithiol. The catalysed reaction is [thioredoxin]-disulfide + L-methionine + H2O = L-methionine (S)-S-oxide + [thioredoxin]-dithiol. In terms of biological role, has an important function as a repair enzyme for proteins that have been inactivated by oxidation. Catalyzes the reversible oxidation-reduction of methionine sulfoxide in proteins to methionine. This is Peptide methionine sulfoxide reductase MsrA from Pectobacterium atrosepticum (strain SCRI 1043 / ATCC BAA-672) (Erwinia carotovora subsp. atroseptica).